A 1061-amino-acid polypeptide reads, in one-letter code: Ceruloplasmin (1061 aa).

Residues 1-19 form the signal peptide; it reads MKFLLLSTFIFLYSSLALA. Plastocyanin-like domains lie at 20-199, 208-356, 369-555, 565-713, 725-895, and 903-1057; these read RDKH…LILC, KEKN…VRDC, HVRH…MKIC, RQKD…VNQC, GERT…LIVC, and FSPK…VEQE. 3 residues coordinate Na(+): Y55, G64, and Y67. Cu(2+)-binding residues include H120 and H122. H120 is an O2 binding site. K128 serves as a coordination point for Ca(2+). The N-linked (GlcNAc...) asparagine glycan is linked to N138. Ca(2+) contacts are provided by Q143, D146, and D147. A disulfide bridge connects residues C173 and C199. Cu(2+) is bound by residues H179 and H181. H179 provides a ligand contact to O2. Residue N226 is glycosylated (N-linked (GlcNAc...) asparagine). S255 contacts Na(+). Residues C275 and C356 are joined by a disulfide bond. H294, C337, and H342 together coordinate Cu(2+). N396 carries N-linked (GlcNAc...) asparagine glycosylation. F407, G416, and Y419 together coordinate Na(+). A disulfide bridge links C529 with C555. N-linked (GlcNAc...) asparagine glycosylation occurs at N583. S612 contributes to the Na(+) binding site. A disulfide bridge connects residues C632 and C713. The Cu(2+) site is built by H651, C694, H699, and M704. C694 (nucleophile; for glutathione peroxidase activity) is an active-site residue. N-linked (GlcNAc...) asparagine glycosylation is present at N757. Na(+) contacts are provided by F762, G771, and Y774. C869 and C895 are joined by a disulfide. The N-linked (GlcNAc...) asparagine glycan is linked to N921. S950 lines the Na(+) pocket. Cu(2+) is bound by residues H989, H992, H994, H1034, C1035, H1036, H1040, and M1045. H992 and H994 together coordinate O2. H1036 serves as a coordination point for O2.

The protein belongs to the multicopper oxidase family. As to quaternary structure, found in a complex with MPO and LTF; interacts directly with MPO and LTF, which allows Fe(3+) incorporation into LTF, activation of CP ferroxidase activity and protection of CP antioxidant properties by MPO. The cofactor is Cu(2+). Expressed in many tissues, including liver, eye and brain.

The protein resides in the secreted. The catalysed reaction is 4 Fe(2+) + O2 + 4 H(+) = 4 Fe(3+) + 2 H2O. It catalyses the reaction 4 Cu(+) + O2 + 4 H(+) = 4 Cu(2+) + 2 H2O. It carries out the reaction a hydroperoxide + 2 glutathione = an alcohol + glutathione disulfide + H2O. The enzyme catalyses 4 nitric oxide + O2 + 2 H2O = 4 nitrite + 4 H(+). The catalysed reaction is 2 glutathione + H2O2 = glutathione disulfide + 2 H2O. Functionally, multifunctional blue, copper-binding (6-7 atoms per molecule) glycoprotein. It has ferroxidase activity oxidizing Fe(2+) to Fe(3+) without releasing radical oxygen species. It is involved in iron transport across the cell membrane. Copper ions provide a large number of enzymatic activites. Oxidizes highly toxic ferrous ions to the ferric state for further incorporation onto apo-transferrins, catalyzes Cu(+) oxidation and promotes the oxidation of biogenic amines such as norepinephrin and serotonin. Provides Cu(2+) ions for the ascorbate-mediated deaminase degradation of the heparan sulfate chains of GPC1. Has glutathione peroxidase-like activity, can remove both hydrogen peroxide and lipid hydroperoxide in the presence of thiols. Also shows NO-oxidase and NO2 synthase activities that determine endocrine NO homeostasis. In Mus musculus (Mouse), this protein is Ceruloplasmin (Cp).